Here is a 251-residue protein sequence, read N- to C-terminus: Triosephosphate isomerase 1 (251 aa).

9 to 11 (NWK) lines the substrate pocket. His95 (electrophile) is an active-site residue. The active-site Proton acceptor is the Glu167. Substrate-binding positions include Gly173, Ser213, and 234-235 (GG).

This sequence belongs to the triosephosphate isomerase family. In terms of assembly, homodimer.

The protein resides in the cytoplasm. The catalysed reaction is D-glyceraldehyde 3-phosphate = dihydroxyacetone phosphate. Its pathway is carbohydrate biosynthesis; gluconeogenesis. It participates in carbohydrate degradation; glycolysis; D-glyceraldehyde 3-phosphate from glycerone phosphate: step 1/1. Involved in the gluconeogenesis. Catalyzes stereospecifically the conversion of dihydroxyacetone phosphate (DHAP) to D-glyceraldehyde-3-phosphate (G3P). The polypeptide is Triosephosphate isomerase 1 (Listeria monocytogenes serovar 1/2a (strain ATCC BAA-679 / EGD-e)).